The sequence spans 36 residues: Potassium channel toxin alpha-KTx 1.9 (36 aa).

The protein belongs to the short scorpion toxin superfamily. Potassium channel inhibitor family. Alpha-KTx 01 subfamily. In terms of tissue distribution, expressed by the venom gland.

The protein resides in the secreted. Functionally, potent selective inhibitor of Kv1/KCNA voltage-gated potassium channels. This chain is Potassium channel toxin alpha-KTx 1.9, found in Centruroides limbatus (Bark scorpion).